Reading from the N-terminus, the 631-residue chain is Occlusion-derived virus envelope protein E66 (631 aa).

It belongs to the baculoviridae E66 family.

Its subcellular location is the virion membrane. Its function is as follows. Component of the polyhedra envelope. The sequence is that of Occlusion-derived virus envelope protein E66 from Leucania separata nucleopolyhedrovirus (LsNPV).